The primary structure comprises 384 residues: Flap endonuclease 1 (384 aa).

Positions 1 to 105 (MGVKGLNQLI…GELEKRLLKR (105 aa)) are N-domain. Mg(2+) is bound at residue D34. DNA-binding residues include R47 and R71. Residues D87, E159, E161, D180, and D182 each contribute to the Mg(2+) site. The interval 123 to 254 (DMTKYQKRLV…VTAYKLIKEH (132 aa)) is I-domain. DNA is bound at residue E159. DNA contacts are provided by G232 and D234. Mg(2+) is bound at residue D234. Residues 341–349 (IQGRLDGFF) are interaction with PCNA. Positions 354-384 (KYSNTSPLGKDDKKRKTNDKKGAAAKKTKRR) are disordered. Residues 362 to 375 (GKDDKKRKTNDKKG) are compositionally biased toward basic and acidic residues.

The protein belongs to the XPG/RAD2 endonuclease family. FEN1 subfamily. In terms of assembly, interacts with PCNA. Three molecules of FEN1 bind to one PCNA trimer with each molecule binding to one PCNA monomer. PCNA stimulates the nuclease activity without altering cleavage specificity. The cofactor is Mg(2+). In terms of processing, phosphorylated. Phosphorylation upon DNA damage induces relocalization to the nuclear plasma.

The protein resides in the nucleus. It is found in the nucleolus. Its subcellular location is the nucleoplasm. The protein localises to the mitochondrion. Its function is as follows. Structure-specific nuclease with 5'-flap endonuclease and 5'-3' exonuclease activities involved in DNA replication and repair. During DNA replication, cleaves the 5'-overhanging flap structure that is generated by displacement synthesis when DNA polymerase encounters the 5'-end of a downstream Okazaki fragment. It enters the flap from the 5'-end and then tracks to cleave the flap base, leaving a nick for ligation. Also involved in the long patch base excision repair (LP-BER) pathway, by cleaving within the apurinic/apyrimidinic (AP) site-terminated flap. Acts as a genome stabilization factor that prevents flaps from equilibrating into structures that lead to duplications and deletions. Also possesses 5'-3' exonuclease activity on nicked or gapped double-stranded DNA, and exhibits RNase H activity. Also involved in replication and repair of rDNA and in repairing mitochondrial DNA. In Lodderomyces elongisporus (strain ATCC 11503 / CBS 2605 / JCM 1781 / NBRC 1676 / NRRL YB-4239) (Yeast), this protein is Flap endonuclease 1.